Reading from the N-terminus, the 648-residue chain is Protein KASH5 (648 aa).

The Cytoplasmic segment spans residues 1 to 606 (MHSILRSSLS…HSPGIRISQH (606 aa)). The disordered stretch occupies residues 206–228 (PEAEESANLESFGGEDPRPEGPA). Positions 230 to 420 (AELLSNLEDL…EEQLSQSQEG (191 aa)) form a coiled coil. Positions 473–497 (EVEPEPEPEPEPEPEPEPQEVEFPS) are enriched in acidic residues. The segment at 473–545 (EVEPEPEPEP…EESWVLADPS (73 aa)) is disordered. The helical; Anchor for type IV membrane protein transmembrane segment at 607-627 (PLVPTPVLGLLLLLLLSILLF) threads the bilayer. Residues 628–648 (SQSPPPTWPHLQLYYLQPPPV) lie on the Perinuclear space side of the membrane.

Core component the LINC complex which is composed of inner nuclear membrane SUN domain-containing proteins coupled to outer nuclear membrane KASH domain-containing nesprins. SUN and KASH domain-containing proteins seem to bind each other promiscuously; however, differentially expression of LINC complex constituents is giving rise to specific assemblies. At least SUN1/2-containing core LINC complexes are proposed to be hexameric composed of three protomers of each KASH and SUN domain-containing protein. Interacts with SUN1; this interaction mediates its telomere localization by forming a SUN1:KASH5 LINC complex. Component of a probable SUN2:KASH5 LINC complex. Self-associates. Interacts with DYNC1H1, DCTN1, DYNC1I1/2 and PAFAH1B1; suggesting the association with the dynein-dynactin motor complex. As to expression, restricted to the testis and the early ootidogenesis ovary. Expressed in spermatocytes and oocytes (at protein level).

It is found in the nucleus outer membrane. It localises to the nucleus. Its subcellular location is the chromosome. The protein localises to the telomere. The protein resides in the nucleus envelope. As a component of the LINC (LInker of Nucleoskeleton and Cytoskeleton) complex, involved in the connection between the nuclear lamina and the cytoskeleton. The nucleocytoplasmic interactions established by the LINC complex play an important role in the transmission of mechanical forces across the nuclear envelope and in nuclear movement and positioning. Required for telomere attachment to nuclear envelope in the prophase of meiosis and for rapid telomere prophase movements implicating a SUN1/2:KASH5 LINC complex in which SUN1 and SUN2 seem to act at least partial redundantly. Required for homolog pairing during meiotic prophase in spermatocytes and probably oocytes. Essential for male and female gametogenesis. Recruits cytoplasmic dynein to telomere attachment sites at the nuclear envelope in spermatocytes. In oocytes is involved in meiotic resumption and spindle formation. The polypeptide is Protein KASH5 (Mus musculus (Mouse)).